Consider the following 59-residue polypeptide: Putative potassium channel toxin Ts24 (59 aa).

The signal sequence occupies residues 1–22; it reads MKAFYGILIIFILISMIHLSQQ. Cystine bridges form between Cys29-Cys50, Cys35-Cys55, and Cys39-Cys57.

It belongs to the short scorpion toxin superfamily. Potassium channel inhibitor family. Alpha-KTx 04 subfamily. As to expression, expressed by the venom gland.

The protein localises to the secreted. In terms of biological role, potently blocks Kv1.1/KCNA1 (85%), Kv1.2/KCNA2 (91%), Kv1.3/KCNA3 (89%), Kv1.6/KCNA6 (94%), and Shaker (97%). This chain is Putative potassium channel toxin Ts24, found in Tityus serrulatus (Brazilian scorpion).